A 565-amino-acid chain; its full sequence is MAFNFNWSPLMADASFYTRAQDLLTAALNKSPKPPIIVDDIIVTELNLGSIPPELEILEIGDLAEDRFRGIFKMSYSGDAFLTLKTRVQANPLNTYLLTRPSFASPLPLAAATPLTIPLQITLSDFKLSGFVILVFSKQKGITVVFRNDPLESLKVSSTFDSIPFVRDFLQREIEAQLRILFMDELPAIIHRLSLRLWVPEYRAGEEDQDQNTNTAGEGPGQDPLASPPQDPVDALGNALNESEIASLSLDSSVETHSLFSQKNLLRLAALTDSQRTLSLFTPSIQEVVYRAWTSPSDQGDISGGVTSPLSPALSRTQSQVGGMSSFQDNASTISSYSRTSTSTHTFSTYGLNLGAGRHSKAHARKRKKRVVDLRRPKQPESETASVTDESSFTETTSAPSVRSAPLPRVNEQPDDPVTPPLSPDSDFHLPPIPERHRFSISRPALRRDIATEMLRETGESSSEPARRHAEVDDIDATPRTIIRHEPSRYEGEKQEAGPSRQLPSTILPFTEEKSTPGPVDQALVERIAGEIARRMREDKLMGTNSCAFWNRPGHEESPPPAYGQ.

The 195-residue stretch at 1–195 folds into the SMP-LTD domain; that stretch reads MAFNFNWSPL…LPAIIHRLSL (195 aa). Disordered regions lie at residues 207-236, 296-317, and 348-504; these read EDQD…VDAL, PSDQ…LSRT, and STYG…RQLP. A compositionally biased stretch (basic residues) spans 358 to 370; the sequence is RHSKAHARKRKKR. Over residues 371–381 the composition is skewed to basic and acidic residues; it reads VVDLRRPKQPE. Residues 382 to 401 are compositionally biased toward polar residues; sequence SETASVTDESSFTETTSAPS. 2 stretches are compositionally biased toward basic and acidic residues: residues 446–472 and 483–496; these read LRRD…HAEV and IRHE…EKQE.

The protein belongs to the MDM34 family. As to quaternary structure, component of the ER-mitochondria encounter structure (ERMES) or MDM complex, composed of mmm1, mdm10, mdm12 and mdm34.

It is found in the mitochondrion outer membrane. Functionally, component of the ERMES/MDM complex, which serves as a molecular tether to connect the endoplasmic reticulum (ER) and mitochondria. Components of this complex are involved in the control of mitochondrial shape and protein biogenesis, and function in nonvesicular lipid trafficking between the ER and mitochondria. Mdm34 is required for the interaction of the ER-resident membrane protein mmm1 and the outer mitochondrial membrane-resident beta-barrel protein mdm10. This chain is Mitochondrial distribution and morphology protein 34, found in Aspergillus terreus (strain NIH 2624 / FGSC A1156).